The sequence spans 333 residues: Fructose-1,6-bisphosphatase class 1 (333 aa).

Positions 90, 113, 115, and 116 each coordinate Mg(2+). Substrate contacts are provided by residues 116–119, N209, Y242, and K272; that span reads DGSS. E278 is a binding site for Mg(2+).

The protein belongs to the FBPase class 1 family. Homotetramer. Requires Mg(2+) as cofactor.

It is found in the cytoplasm. It catalyses the reaction beta-D-fructose 1,6-bisphosphate + H2O = beta-D-fructose 6-phosphate + phosphate. It participates in carbohydrate biosynthesis; gluconeogenesis. The protein is Fructose-1,6-bisphosphatase class 1 of Pasteurella multocida (strain Pm70).